The primary structure comprises 425 residues: MSEDNSQGREYTLEADSELRFEIEQKNAKVLVTLLTGFAELFGTELVKKKKYEFGVGAKVAIFTYQGCVIHVSGQMDVCYISKETPMVQYINCHAALEQFRLEAEQRDKRGPSVLIVGPMDVGKSTLCRILLNYAVRVGRRPLYADLDVGQGAISVAGNVATILIERPASIEDGFAKTAPLVYHFGHKSPSGNSVLYNAVVSKMAEVTLQSLDANKRTKSSGIIVNTCGWVKGSGYEHLLHAARAYRARAIFVLDQERLYNDLLRDVPANVHVVLLPKSGGVVERSKGLRHESREQRIKEYFYGNARTPFYPFSFEVKFQDLRLYKIGAPPLPDSCMPIGMKAEDNKKKVVAVTATPALLHHILTLSFAESTDDDVIGTNIAGFCCVTEVDMERQSVMLLSPQPRPLPPNALLLWSELQFMDNHA.

ATP contacts are provided by residues Glu-18, Lys-59, and 121-126; that span reads DVGKST.

It belongs to the Clp1 family. Clp1 subfamily.

Its subcellular location is the nucleus. In terms of biological role, required for endonucleolytic cleavage during polyadenylation-dependent pre-mRNA 3'-end formation. This is Protein CLP1 homolog (cbc) from Drosophila grimshawi (Hawaiian fruit fly).